The sequence spans 659 residues: Putative RING finger protein R311 (659 aa).

An RING-type zinc finger spans residues 502-540 (CPVCYDDDYIKTKLICGHTVCLTCVLNILPNSKGCPLCM).

The chain is Putative RING finger protein R311 from Acanthamoeba polyphaga (Amoeba).